Consider the following 548-residue polypeptide: Fumarate hydratase class I, anaerobic (548 aa).

Residue Cys-105 coordinates [4Fe-4S] cluster. An N6-acetyllysine modification is found at Lys-192. [4Fe-4S] cluster contacts are provided by Cys-224 and Cys-318.

This sequence belongs to the class-I fumarase family. Homodimer. [4Fe-4S] cluster is required as a cofactor.

The catalysed reaction is (S)-malate = fumarate + H2O. It catalyses the reaction (S,S)-tartrate = oxaloacetate + H2O. In terms of biological role, catalyzes the reversible hydration of fumarate to (S)-malate. Functions in the generation of fumarate for use as an anaerobic electron acceptor. To a lesser extent, also displays D-tartrate dehydratase activity, but is not able to convert (R)-malate, L-tartrate or meso-tartrate. Is required for anaerobic growth on D-tartrate. The sequence is that of Fumarate hydratase class I, anaerobic from Escherichia coli (strain K12).